Reading from the N-terminus, the 213-residue chain is Orotate phosphoribosyltransferase (213 aa).

Lys-26 contributes to the 5-phospho-alpha-D-ribose 1-diphosphate binding site. 34–35 provides a ligand contact to orotate; the sequence is FF. 5-phospho-alpha-D-ribose 1-diphosphate contacts are provided by residues 72-73, Arg-99, Lys-100, Lys-103, His-105, and 124-132; these read YK and DDVITAGTA. Residues Thr-128 and Arg-156 each coordinate orotate.

Belongs to the purine/pyrimidine phosphoribosyltransferase family. PyrE subfamily. In terms of assembly, homodimer. Requires Mg(2+) as cofactor.

It carries out the reaction orotidine 5'-phosphate + diphosphate = orotate + 5-phospho-alpha-D-ribose 1-diphosphate. It participates in pyrimidine metabolism; UMP biosynthesis via de novo pathway; UMP from orotate: step 1/2. Functionally, catalyzes the transfer of a ribosyl phosphate group from 5-phosphoribose 1-diphosphate to orotate, leading to the formation of orotidine monophosphate (OMP). The polypeptide is Orotate phosphoribosyltransferase (Shigella flexneri serotype 5b (strain 8401)).